The sequence spans 508 residues: Glycogen synthase (508 aa).

Lysine 15 lines the ADP-alpha-D-glucose pocket. The disordered stretch occupies residues 483–508 (ARNRAETRPQTASALSYREPRPAAEY).

Belongs to the glycosyltransferase 1 family. Bacterial/plant glycogen synthase subfamily.

It catalyses the reaction [(1-&gt;4)-alpha-D-glucosyl](n) + ADP-alpha-D-glucose = [(1-&gt;4)-alpha-D-glucosyl](n+1) + ADP + H(+). It participates in glycan biosynthesis; glycogen biosynthesis. Synthesizes alpha-1,4-glucan chains using ADP-glucose. This Paracidovorax citrulli (strain AAC00-1) (Acidovorax citrulli) protein is Glycogen synthase.